A 94-amino-acid chain; its full sequence is Small ribosomal subunit protein bS6 (94 aa).

It belongs to the bacterial ribosomal protein bS6 family.

Functionally, binds together with bS18 to 16S ribosomal RNA. This is Small ribosomal subunit protein bS6 from Phytoplasma mali (strain AT).